Here is a 130-residue protein sequence, read N- to C-terminus: Small ribosomal subunit protein uS9 (130 aa).

The protein belongs to the universal ribosomal protein uS9 family.

The polypeptide is Small ribosomal subunit protein uS9 (Hamiltonella defensa subsp. Acyrthosiphon pisum (strain 5AT)).